We begin with the raw amino-acid sequence, 323 residues long: DNA repair and recombination protein RadA (323 aa).

Position 114-121 (114-121 (GEFGSGKT)) interacts with ATP.

It belongs to the eukaryotic RecA-like protein family.

In terms of biological role, involved in DNA repair and in homologous recombination. Binds and assemble on single-stranded DNA to form a nucleoprotein filament. Hydrolyzes ATP in a ssDNA-dependent manner and promotes DNA strand exchange between homologous DNA molecules. This chain is DNA repair and recombination protein RadA, found in Picrophilus torridus (strain ATCC 700027 / DSM 9790 / JCM 10055 / NBRC 100828 / KAW 2/3).